A 414-amino-acid chain; its full sequence is Secernin-1 (414 aa).

Belongs to the peptidase C69 family. Secernin subfamily.

Its subcellular location is the cytoplasm. Its function is as follows. Regulates exocytosis in mast cells. Increases both the extent of secretion and the sensitivity of mast cells to stimulation with calcium. The chain is Secernin-1 (Scrn1) from Rattus norvegicus (Rat).